The chain runs to 81 residues: Exodeoxyribonuclease 7 small subunit (81 aa).

The segment at 59–81 is disordered; sequence KLVDKDGNEKTLDPQNASAPEEE. The span at 60–70 shows a compositional bias: basic and acidic residues; the sequence is LVDKDGNEKTL. The segment covering 71–81 has biased composition (polar residues); sequence DPQNASAPEEE.

This sequence belongs to the XseB family. As to quaternary structure, heterooligomer composed of large and small subunits.

It is found in the cytoplasm. The catalysed reaction is Exonucleolytic cleavage in either 5'- to 3'- or 3'- to 5'-direction to yield nucleoside 5'-phosphates.. Bidirectionally degrades single-stranded DNA into large acid-insoluble oligonucleotides, which are then degraded further into small acid-soluble oligonucleotides. The sequence is that of Exodeoxyribonuclease 7 small subunit from Lactobacillus gasseri (strain ATCC 33323 / DSM 20243 / BCRC 14619 / CIP 102991 / JCM 1131 / KCTC 3163 / NCIMB 11718 / NCTC 13722 / AM63).